A 1347-amino-acid polypeptide reads, in one-letter code: BTB/POZ domain-containing protein 1 (1347 aa).

2 ANK repeats span residues 51 to 81 and 86 to 115; these read YGRTVLHIAVSENKNSFVRSLLQHKGIDVFV and SGYTALHRAIYVGNLEAASLLLSKDPSFRS. RCC1 repeat units lie at residues 148–198, 215–264, 265–322, and 324–372; these read GNEL…DKIL, SQNV…ALTK, FGSI…AWTD, and DIYS…CLLQ. BTB domains lie at 619 to 698 and 758 to 829; these read SDVT…LSPW and MDTV…VELF. 4 disordered regions span residues 1006–1029, 1104–1139, 1193–1237, and 1286–1347; these read SSNQSDSLNKEDAEEKSPKPNVVN, EKADASTTTVLSDSRFMKAPTKKSQREKKKELSKQV, EGSS…PLSI, and GILK…RAVK. The span at 1013 to 1023 shows a compositional bias: basic and acidic residues; sequence LNKEDAEEKSP. Polar residues-rich tracts occupy residues 1208-1237 and 1297-1306; these read SNGSPTSWNLLTKPSPRSASLPKNSQPLSI and NRKQGQASKQ. Positions 1336-1347 are enriched in basic residues; that stretch reads TTHKKGKARAVK.

Interacts with cul3.

It participates in protein modification; protein ubiquitination. Its function is as follows. Probable substrate-specific adapter of an E3 ubiquitin-protein ligase complex which mediates the ubiquitination and subsequent proteasomal degradation of target proteins. This Schizosaccharomyces pombe (strain 972 / ATCC 24843) (Fission yeast) protein is BTB/POZ domain-containing protein 1 (btb1).